We begin with the raw amino-acid sequence, 465 residues long: Protein hedgehog (465 aa).

A lipid anchor (N-palmitoyl cysteine) is attached at cysteine 79. 7 residues coordinate Ca(2+): glutamate 143, glutamate 144, aspartate 149, threonine 179, glutamate 180, aspartate 183, and aspartate 185. Glycine 251 carries Cholesterol glycine ester lipidation.

It belongs to the hedgehog family. In terms of assembly, interacts with shf. The C-terminal part of the hedgehog protein precursor displays an autoproteolysis activity that results in the cleavage of the full-length protein into two parts (N-product and C-product). In addition, the C-terminal part displays a cholesterol transferase activity that results by the covalent attachment of a cholesterol moiety to the C-terminal of the newly generated N-product. The N-product is the active species in both local and long-range signaling, whereas the C-product has no signaling activity. In terms of processing, cholesterylation is required for N-product targeting to lipid rafts and multimerization. Post-translationally, N-palmitoylation by Rasp of the hedgehog N-product, within the secretory pathway, is required for the embryonic and larval patterning activities of the hedgehog signal.

It localises to the nucleus. Its subcellular location is the cytoplasm. It is found in the cell membrane. It catalyses the reaction glycyl-L-cysteinyl-[protein] + cholesterol + H(+) = [protein]-C-terminal glycyl cholesterol ester + N-terminal L-cysteinyl-[protein]. Its function is as follows. The C-terminal part of the hedgehog protein precursor displays an autoproteolysis activity that results in the cleavage of the full-length protein into two parts (N-product and C-product). In addition, the C-terminal part displays a cholesterol transferase activity that results by the covalent attachment of a cholesterol moiety to the C-terminal of the newly generated N-product. Once cleaved, the C-product has no signaling activity and diffuses from the cell. In terms of biological role, the dually lipidated hedgehog protein N-product is a morphogen which is essential for a variety of patterning events during development. Establishes the anterior-posterior axis of the embryonic segments and patterns the larval imaginal disks. Binds to the patched (ptc) receptor, which functions in association with smoothened (smo), to activate the transcription of target genes wingless (wg), decapentaplegic (dpp) and ptc. In the absence of hh, ptc represses the constitutive signaling activity of smo through fused (fu). Essential component of a signaling pathway which regulates the Duox-dependent gut immune response to bacterial uracil; required to activate Cad99C-dependent endosome formation, norpA-dependent Ca2+ mobilization and p38 MAPK, which are essential steps in the Duox-dependent production of reactive oxygen species (ROS) in response to intestinal bacterial infection. During photoreceptor differentiation, it up-regulates transcription of Ubr3, which in turn promotes the hh-signaling pathway by mediating the ubiquitination and degradation of cos. The chain is Protein hedgehog from Drosophila sechellia (Fruit fly).